The sequence spans 214 residues: ER lumen protein-retaining receptor (214 aa).

The Lumenal portion of the chain corresponds to methionine 1–asparagine 4. The helical transmembrane segment at leucine 5–threonine 23 threads the bilayer. Over lysine 24–arginine 37 the chain is Cytoplasmic. Residues serine 38–tyrosine 55 form a helical membrane-spanning segment. Residues asparagine 56–threonine 63 are Lumenal-facing. A helical membrane pass occupies residues isoleucine 64 to lysine 82. The Cytoplasmic segment spans residues arginine 83 to tryptophan 98. Residues tyrosine 99–threonine 112 form a helical membrane-spanning segment. The Lumenal segment spans residues glutamate 113 to glutamate 119. Residues isoleucine 120–leucine 139 form a helical membrane-spanning segment. The Cytoplasmic segment spans residues leucine 140 to serine 151. The chain crosses the membrane as a helical span at residues glutamine 152–tyrosine 170. Topologically, residues arginine 171–proline 181 are lumenal. A helical transmembrane segment spans residues leucine 182–isoleucine 202. The Cytoplasmic segment spans residues lysine 203 to proline 214.

Belongs to the ERD2 family.

It is found in the endoplasmic reticulum membrane. In terms of biological role, required for the retention of luminal endoplasmic reticulum proteins. Determines the specificity of the luminal ER protein retention system. Also required for normal vesicular traffic through the Golgi. The polypeptide is ER lumen protein-retaining receptor (Entamoeba histolytica (strain ATCC 30459 / HM-1:IMSS / ABRM)).